Here is a 299-residue protein sequence, read N- to C-terminus: Ectoine dioxygenase (299 aa).

The disordered stretch occupies residues 1-40 (MTTTTTNVTDLYPTRGATEVATPRQDPVVWGSPDAPGPVS). Q133 is an L-ectoine binding site. K139 provides a ligand contact to 2-oxoglutarate. The Fe cation site is built by H150, D152, and H251.

Belongs to the PhyH family. EctD subfamily. As to quaternary structure, homodimer. Fe(2+) is required as a cofactor.

It catalyses the reaction L-ectoine + 2-oxoglutarate + O2 = 5-hydroxyectoine + succinate + CO2. Functionally, involved in the biosynthesis of 5-hydroxyectoine, called compatible solute, which helps organisms to survive extreme osmotic stress by acting as a highly soluble organic osmolyte. Catalyzes the 2-oxoglutarate-dependent selective hydroxylation of L-ectoine to yield (4S,5S)-5-hydroxyectoine. The polypeptide is Ectoine dioxygenase (Streptomyces coelicolor (strain ATCC BAA-471 / A3(2) / M145)).